We begin with the raw amino-acid sequence, 235 residues long: (5-formylfuran-3-yl)methyl phosphate synthase (235 aa).

Catalysis depends on Lys27, which acts as the Schiff-base intermediate with substrate. Lys86 acts as the Proton acceptor in catalysis.

It belongs to the MfnB family.

The catalysed reaction is 2 D-glyceraldehyde 3-phosphate = 4-(hydroxymethyl)-2-furancarboxaldehyde phosphate + phosphate + 2 H2O. It functions in the pathway cofactor biosynthesis; methanofuran biosynthesis. Catalyzes the formation of 4-(hydroxymethyl)-2-furancarboxaldehyde phosphate (4-HFC-P) from two molecules of glyceraldehyde-3-P (GA-3-P). The polypeptide is (5-formylfuran-3-yl)methyl phosphate synthase (Archaeoglobus fulgidus (strain ATCC 49558 / DSM 4304 / JCM 9628 / NBRC 100126 / VC-16)).